Here is a 227-residue protein sequence, read N- to C-terminus: Cytidylate kinase (227 aa).

10–18 lines the ATP pocket; that stretch reads GPASSGKST.

Belongs to the cytidylate kinase family. Type 1 subfamily.

The protein resides in the cytoplasm. It carries out the reaction CMP + ATP = CDP + ADP. The catalysed reaction is dCMP + ATP = dCDP + ADP. This is Cytidylate kinase from Streptococcus agalactiae serotype Ia (strain ATCC 27591 / A909 / CDC SS700).